The primary structure comprises 140 residues: Small ribosomal subunit protein uS19 (140 aa).

The protein belongs to the universal ribosomal protein uS19 family.

In terms of biological role, protein S19 forms a complex with S13 that binds strongly to the 16S ribosomal RNA. This Saccharolobus solfataricus (strain ATCC 35092 / DSM 1617 / JCM 11322 / P2) (Sulfolobus solfataricus) protein is Small ribosomal subunit protein uS19 (rps19).